Here is a 455-residue protein sequence, read N- to C-terminus: Tubulin delta chain (455 aa).

143–149 (AGGTGSG) is a GTP binding site.

This sequence belongs to the tubulin family. In terms of assembly, found in a complex with TEDC1, TEDC2, TUBE1 and TUBD1. In terms of tissue distribution, highly expressed in testis.

It is found in the cell projection. The protein localises to the cilium. Its subcellular location is the cytoplasm. The protein resides in the cytoskeleton. It localises to the microtubule organizing center. It is found in the centrosome. The protein localises to the centriole. Its subcellular location is the nucleus. In terms of biological role, acts as a positive regulator of hedgehog signaling and regulates ciliary function. This is Tubulin delta chain (Tubd1) from Mus musculus (Mouse).